Reading from the N-terminus, the 322-residue chain is F-box protein At2g16300 (322 aa).

The F-box domain occupies 2 to 50; sequence ADWSLLPNDLLELIVGHLETSFEIVLFRSVCSSWRSVVPPQDQSRCLSI.

This Arabidopsis thaliana (Mouse-ear cress) protein is F-box protein At2g16300.